A 126-amino-acid polypeptide reads, in one-letter code: Small ribosomal subunit protein uS12m (126 aa).

Residues 1–11 (MATSNQMGANT) are compositionally biased toward polar residues. Positions 1 to 21 (MATSNQMGANTRSKKKKKNLK) are disordered. The segment covering 12 to 21 (RSKKKKKNLK) has biased composition (basic residues).

It belongs to the universal ribosomal protein uS12 family.

The protein localises to the mitochondrion. Functionally, protein S12 is involved in the translation initiation step. The protein is Small ribosomal subunit protein uS12m (RPS12) of Bigelowiella natans (Pedinomonas minutissima).